The following is a 503-amino-acid chain: Inosine-5'-monophosphate dehydrogenase (503 aa).

Glycine 20 and serine 22 together coordinate K(+). CBS domains follow at residues 103–163 (FVVS…ETKV) and 167–228 (MTPF…LVDS). Position 261-263 (261-263 (DSS)) interacts with NAD(+). K(+) contacts are provided by aspartate 264, phenylalanine 266, glycine 314, and glycine 316. 312-314 (GIG) provides a ligand contact to NAD(+). IMP is bound at residue serine 317. Position 319 (cysteine 319) interacts with K(+). Catalysis depends on cysteine 319, which acts as the Thioimidate intermediate. Residues 358–360 (DGG), 381–382 (GR), and 405–409 (YWGEG) contribute to the IMP site. The active-site Proton acceptor is arginine 418. Glutamate 431 serves as a coordination point for IMP. K(+) is bound by residues asparagine 460, glutamate 485, glycine 486, and glycine 487.

Belongs to the IMPDH/GMPR family. As to quaternary structure, homotetramer. Requires K(+) as cofactor.

Its subcellular location is the cytoplasm. It carries out the reaction IMP + NAD(+) + H2O = XMP + NADH + H(+). It participates in purine metabolism; XMP biosynthesis via de novo pathway; XMP from IMP: step 1/1. Its activity is regulated as follows. Mycophenolic acid (MPA) is a non-competitive inhibitor that prevents formation of the closed enzyme conformation by binding to the same site as the amobile flap. In contrast, mizoribine monophosphate (MZP) is a competitive inhibitor that induces the closed conformation. MPA is a potent inhibitor of mammalian IMPDHs but a poor inhibitor of the bacterial enzymes. MZP is a more potent inhibitor of bacterial IMPDH. Catalyzes the conversion of inosine 5'-phosphate (IMP) to xanthosine 5'-phosphate (XMP), the first committed and rate-limiting step in the de novo synthesis of guanine nucleotides, and therefore plays an important role in the regulation of cell growth. Could also have a single-stranded nucleic acid-binding activity and could play a role in RNA and/or DNA metabolism. The polypeptide is Inosine-5'-monophosphate dehydrogenase (Tritrichomonas foetus (Trichomonas foetus)).